Consider the following 38-residue polypeptide: Toxin CSTX-16 (38 aa).

2 positions are modified to glutamine amide: Gln-19 and Gln-38.

This sequence belongs to the cationic peptide 04 (cupiennin) family. 10 (double chain) subfamily. Expressed by the venom gland.

It is found in the secreted. This Cupiennius salei (American wandering spider) protein is Toxin CSTX-16.